Here is a 732-residue protein sequence, read N- to C-terminus: Cullin-3B (732 aa).

Residues 662-724 (DRKPQIEAAI…RDFLERDNTD (63 aa)) form the Cullin neddylation domain. A Glycyl lysine isopeptide (Lys-Gly) (interchain with G-Cter in NEDD8) cross-link involves residue Lys676.

It belongs to the cullin family. As to quaternary structure, interacts with BTB/POZ-MATH proteins BPM1 and BPM3. Post-translationally, neddylated. Deneddylated via its interaction with the COP9 signalosome (CSN) complex.

The protein operates within protein modification; protein ubiquitination. In terms of biological role, component of the cullin-RING ubiquitin ligases (CRL), or CUL3-RBX1-BTB protein E3 ligase complexes which mediate the ubiquitination and subsequent proteasomal degradation of target proteins. The functional specificity of the CRL complex depends on the BTB domain-containing protein as the substrate recognition component. Involved in embryo pattern formation and endosperm development. Required for the normal division and organization of the root stem cells and columella root cap cells. Regulates primary root growth by an unknown pathway, but in an ethylene-dependent manner. Functions in distal root patterning, by an ethylene-independent mechanism. Functionally redundant with CUL3A. This Arabidopsis thaliana (Mouse-ear cress) protein is Cullin-3B (CUL3B).